The chain runs to 234 residues: Demethylmenaquinone methyltransferase (234 aa).

Residues T58, D79, and 106-107 contribute to the S-adenosyl-L-methionine site; that span reads NA.

The protein belongs to the class I-like SAM-binding methyltransferase superfamily. MenG/UbiE family.

The enzyme catalyses a 2-demethylmenaquinol + S-adenosyl-L-methionine = a menaquinol + S-adenosyl-L-homocysteine + H(+). It participates in quinol/quinone metabolism; menaquinone biosynthesis; menaquinol from 1,4-dihydroxy-2-naphthoate: step 2/2. In terms of biological role, methyltransferase required for the conversion of demethylmenaquinol (DMKH2) to menaquinol (MKH2). This is Demethylmenaquinone methyltransferase from Bacillus pumilus (strain SAFR-032).